Reading from the N-terminus, the 259-residue chain is Protein YIF1B (259 aa).

M1 bears the N-acetylmethionine mark. Positions 1-61 are disordered; sequence MHATGLAAPA…QPSPGSLGYP (61 aa). At 9–153 the chain is on the cytoplasmic side; that stretch reads PAGTPRLRKW…APRFDINAPD (145 aa). The residue at position 12 (T12) is a Phosphothreonine. Positions 14–24 are enriched in basic residues; sequence RLRKWPSKRRV. S64 bears the Phosphoserine mark. Residues 154-174 traverse the membrane as a helical segment; sequence LYIPAMAFITYILVAGLALGT. At 175–186 the chain is on the extracellular side; the sequence is QDRMIGGVLTGL. The chain crosses the membrane as a helical span at residues 187–207; the sequence is LFGKIGYYLVLAWCCVSIFVF. The Cytoplasmic segment spans residues 208–237; that stretch reads MIRTLRLKILAQAAAEGVPVRGARNQLRMY. Residues 238-258 form a helical membrane-spanning segment; it reads LTMAVAAAQPVLMYWLTFHLV. Position 259 (R259) is a topological domain, extracellular.

The protein belongs to the YIF1 family. Interacts with HTR1A (via C-terminus). Interacts with ABCB9 (via TMD0); this interaction allows (but is not essential) the ER-to-Golgi trafficking and strongly depends on a salt bridge within TMD0. As to expression, highly expressed in brain. Expressed in heart, kidney, and lung and lower levels in spleen, muscle, and intestine (at protein level). Expressed in serotoninergic neurons (at protein level).

It localises to the endoplasmic reticulum membrane. The protein localises to the golgi apparatus membrane. The protein resides in the endoplasmic reticulum-Golgi intermediate compartment membrane. In terms of biological role, functions in endoplasmic reticulum to Golgi vesicle-mediated transport and regulates the proper organization of the endoplasmic reticulum and the Golgi. Plays a key role in targeting to neuronal dendrites receptors such as HTR1A. Plays also a role in primary cilium and sperm flagellum assembly probably through protein transport to these compartments. The chain is Protein YIF1B from Rattus norvegicus (Rat).